A 376-amino-acid polypeptide reads, in one-letter code: 1-acyl-sn-glycerol-3-phosphate acyltransferase 3 (376 aa).

2 helical membrane-spanning segments follow: residues 14-34 (VLFLISGLIVNIIQLVFFIIV) and 49-69 (VAELLWLQLIWLFDWWACIKI). The HXXXXD motif signature appears at 92 to 97 (HRSDID). 3 consecutive transmembrane segments (helical) span residues 98-118 (WLIGWVMAQRVGCLGSSLAIM), 306-326 (LIVVIIWLGFLVFGGFKLLQW), and 335-355 (IILLFVFFLVIATITMQILIQ).

The protein belongs to the 1-acyl-sn-glycerol-3-phosphate acyltransferase family. In terms of tissue distribution, predominantly expressed in pollen.

The protein resides in the membrane. It catalyses the reaction a 1-acyl-sn-glycero-3-phosphate + an acyl-CoA = a 1,2-diacyl-sn-glycero-3-phosphate + CoA. The protein operates within phospholipid metabolism; CDP-diacylglycerol biosynthesis; CDP-diacylglycerol from sn-glycerol 3-phosphate: step 2/3. Converts lysophosphatidic acid (LPA) into phosphatidic acid by incorporating acyl moiety at the 2 position. Has preference for C-18-CoA substrates compared to C-16-CoA substrates. This is 1-acyl-sn-glycerol-3-phosphate acyltransferase 3 (LPAT3) from Arabidopsis thaliana (Mouse-ear cress).